We begin with the raw amino-acid sequence, 411 residues long: Zinc finger protein draculin (411 aa).

The segment at 1 to 33 (MKNTTKPCRTEHHNAEGQRDRMEGNKKGETKAK) is disordered. The span at 8-32 (CRTEHHNAEGQRDRMEGNKKGETKA) shows a compositional bias: basic and acidic residues. C2H2-type zinc fingers lie at residues 36-58 (VACSHCKKRFSHKAHLQIHMRVH), 64-86 (YRCDQCGKCFPYKQSLKLHLDIH), 92-114 (YTCDECGESFKTRLQLRSHMTLH), 120-142 (YKCDQCEKSYGREDHLQRHMKLH), 148-170 (HKCEHCGKSFPMRDLLRSHLMVH), 176-198 (YTCDQCGKGFTLKKSYNEHMNIH), 204-226 (YTCDQCGKGFPYEQSLNLHMRFH), 232-254 (FTCDQCGQSFSQKGAYNIHMKIH), 260-282 (YTCDQCGMSFRHGYSLKLHMTHH), 288-310 (FHCDQCDKCYSTALFLKNHIKTH), 316-338 (YSCLTCGKTFNQLRGLRLHEKRH), 344-366 (FMCFDCGKCYFTDTELKQHLPVH), and 372-394 (YMCSLCFKSFPRMGSLIVHEKTH).

In terms of tissue distribution, specifically expressed in the hematopoietic lineage during embryogenesis; first expressed at the late blastula stage around the blastoderm margin. During gastrulation, restricted to the ventral mesoderm, the presumptive prechordal plate and the dorso-marginal cells of the organizer. At the 3-somite stage, strongly expressed in a caudal domain (marking the erythroid lineage) and a cephalic domain of the lateral mesoderm. At the 8- to 10-somite stage, caudal expression is in two bands of lateral mesoderm which later converge at the midline. Anterior expression is also in two bands of lateral mesoderm which converge as two patches at the midline by the 15-somite stage, with increased scattering of single cells (macrophage precursors) away from the midline to the yolksac. Once at the yolksac, expression is lost. By 20-24 hours post-fertilization (hpf), expressed in proerythroblasts in the erythroid blood island centered above the uro-genital opening. Expression persists in circulating erythroblasts but is lost in mature erythrocytes.

In Danio rerio (Zebrafish), this protein is Zinc finger protein draculin.